A 312-amino-acid chain; its full sequence is uncharacterized protein (312 aa).

Residues 8–65 (PGLTCFEIFLAIAEAGSLGGAARELGLTQQAVSRRLASMEAQIGVRLAIRTTRGSQLT) enclose the HTH lysR-type domain. The segment at residues 25 to 45 (LGGAARELGLTQQAVSRRLAS) is a DNA-binding region (H-T-H motif).

This sequence belongs to the LysR transcriptional regulatory family.

This is an uncharacterized protein from Mycobacterium tuberculosis (strain CDC 1551 / Oshkosh).